The following is a 335-amino-acid chain: Glycerol-3-phosphate dehydrogenase [NAD(P)+] (335 aa).

NADPH contacts are provided by Trp-12 and Lys-106. Positions 106, 136, and 138 each coordinate sn-glycerol 3-phosphate. Ala-140 contacts NADPH. Lys-191, Asp-244, Ser-254, Arg-255, and Asn-256 together coordinate sn-glycerol 3-phosphate. Lys-191 functions as the Proton acceptor in the catalytic mechanism. Arg-255 lines the NADPH pocket. Positions 279 and 281 each coordinate NADPH.

Belongs to the NAD-dependent glycerol-3-phosphate dehydrogenase family.

Its subcellular location is the cytoplasm. It carries out the reaction sn-glycerol 3-phosphate + NAD(+) = dihydroxyacetone phosphate + NADH + H(+). The enzyme catalyses sn-glycerol 3-phosphate + NADP(+) = dihydroxyacetone phosphate + NADPH + H(+). Its pathway is membrane lipid metabolism; glycerophospholipid metabolism. Functionally, catalyzes the reduction of the glycolytic intermediate dihydroxyacetone phosphate (DHAP) to sn-glycerol 3-phosphate (G3P), the key precursor for phospholipid synthesis. In Fusobacterium nucleatum subsp. nucleatum (strain ATCC 25586 / DSM 15643 / BCRC 10681 / CIP 101130 / JCM 8532 / KCTC 2640 / LMG 13131 / VPI 4355), this protein is Glycerol-3-phosphate dehydrogenase [NAD(P)+].